Here is a 487-residue protein sequence, read N- to C-terminus: Cobyric acid synthase (487 aa).

Residues 249-435 enclose the GATase cobBQ-type domain; it reads GIDIAIVRLP…IHGIFDEGDF (187 aa). Residue Cys330 is the Nucleophile of the active site. His427 is an active-site residue.

The protein belongs to the CobB/CobQ family. CobQ subfamily.

It functions in the pathway cofactor biosynthesis; adenosylcobalamin biosynthesis. Its function is as follows. Catalyzes amidations at positions B, D, E, and G on adenosylcobyrinic A,C-diamide. NH(2) groups are provided by glutamine, and one molecule of ATP is hydrogenolyzed for each amidation. This is Cobyric acid synthase from Clostridium perfringens (strain ATCC 13124 / DSM 756 / JCM 1290 / NCIMB 6125 / NCTC 8237 / Type A).